The sequence spans 732 residues: Sesterbrasiliatriene synthase PbSS (732 aa).

The tract at residues methionine 1–threonine 342 is terpene cyclase. Positions 105 and 109 each coordinate Mg(2+). Substrate contacts are provided by residues aspartate 105, aspartate 109, arginine 193–glutamate 196, phenylalanine 242–phenylalanine 246, and arginine 334–tyrosine 335. A DDXXD 1 motif is present at residues aspartate 105 to aspartate 109. Residues aspartate 238–phenylalanine 246 carry the NSE/DTE motif. The prenyltransferase stretch occupies residues threonine 343–leucine 732. Disordered regions lie at residues lysine 371–serine 390 and alanine 398–asparagine 420. The span at asparagine 411 to asparagine 420 shows a compositional bias: basic and acidic residues. Lysine 453, arginine 456, and histidine 485 together coordinate isopentenyl diphosphate. Residues aspartate 492 and aspartate 496 each coordinate Mg(2+). Residues aspartate 492–aspartate 496 carry the DDXXD 2 motif. Residue arginine 501 coordinates dimethylallyl diphosphate. An isopentenyl diphosphate-binding site is contributed by arginine 502. Dimethylallyl diphosphate is bound by residues lysine 579, threonine 580, glutamine 615, asparagine 622, lysine 632, and lysine 642.

In the N-terminal section; belongs to the terpene synthase family. The protein in the C-terminal section; belongs to the FPP/GGPP synthase family. In terms of assembly, hexamer. Mg(2+) is required as a cofactor.

It carries out the reaction isopentenyl diphosphate + (2E,6E)-farnesyl diphosphate = (2E,6E,10E)-geranylgeranyl diphosphate + diphosphate. The catalysed reaction is isopentenyl diphosphate + (2E,6E,10E)-geranylgeranyl diphosphate = (2E,6E,10E,14E)-geranylfarnesyl diphosphate + diphosphate. It participates in secondary metabolite biosynthesis; terpenoid biosynthesis. In terms of biological role, bifunctional sesterterpene synthase that possesses both prenyl transferase and terpene cyclase activity, converting isopentenyl diphosphate and dimethylallyl diphosphate into geranylfarnesyl diphosphate (GFPP) and further converting GFPP into sesterbrasiliatriene. The polypeptide is Sesterbrasiliatriene synthase PbSS (PbSS) (Penicillium brasilianum).